The primary structure comprises 404 residues: Argininosuccinate synthase (404 aa).

ATP is bound at residue 9-17 (AYSGGLDTS). Position 86 (Tyr-86) interacts with L-citrulline. Gly-116 contributes to the ATP binding site. L-aspartate is bound by residues Thr-118, Asn-122, and Asp-123. Asn-122 contacts L-citrulline. Residues Arg-126, Ser-174, Ser-183, Glu-259, and Tyr-271 each contribute to the L-citrulline site.

This sequence belongs to the argininosuccinate synthase family. Type 1 subfamily. As to quaternary structure, homotetramer.

The protein resides in the cytoplasm. The catalysed reaction is L-citrulline + L-aspartate + ATP = 2-(N(omega)-L-arginino)succinate + AMP + diphosphate + H(+). It functions in the pathway amino-acid biosynthesis; L-arginine biosynthesis; L-arginine from L-ornithine and carbamoyl phosphate: step 2/3. This is Argininosuccinate synthase from Listeria monocytogenes serovar 1/2a (strain ATCC BAA-679 / EGD-e).